Here is a 639-residue protein sequence, read N- to C-terminus: MEPPLSKRNPPALRLADLATAQVQPLQNMTGFPALAGPPAHSQLRAAVAHLRLRDLGADPGVATTPLGPEHMAQASTLGLSPPSQAFPAHPEAPAAAARAAALVAHPGAGSYPCGGGSSGAQPSAPPPPAPPLPPTPSPPPPPPPPPPPALSGYTTTNSGGGGSSGKGHSRDFVLRRDLSATAPAAAMHGAPLGGEQRSGTGSPQHPAPPPHSAGMFISASGTYAGPDGSGGPALFPALHDTPGAPGGHPHPLNGQMRLGLAAAAAAAAAELYGRAEPPFAPRSGDAHYGAVAAAAAAALHGYGAVNLNLNLAAAAAAAAAGPGPHLQHHAPPPAPPPPPAPAQHPHQHHPHLPGAAGAFLRYMRQPIKQELICKWIDPDELAGLPPPPPPPPPPPPPPPAGGAKPCSKTFGTMHELVNHVTVEHVGGPEQSSHVCFWEDCPREGKPFKAKYKLINHIRVHTGEKPFPCPFPGCGKVFARSENLKIHKRTHTGEKPFKCEFDGCDRKFANSSDRKKHSHVHTSDKPYYCKIRGCDKSYTHPSSLRKHMKIHCKSPPPSPGPLGYSSVGTPVGAPLSPVLDPARSHSSTLSPQVTNLNEWYVCQASGAPSHLHTPSSNGTTSETEDEEIYGNPEVVRTIH.

4 disordered regions span residues Pro113–Arg171, His189–His251, Pro323–Gly355, and Pro379–Lys409. Pro residues predominate over residues Ser124–Ala150. 2 stretches are compositionally biased toward pro residues: residues Ala331 to Ala343 and Leu385 to Ala401. The segment at His434 to His461 adopts a C2H2-type 1; atypical zinc-finger fold. 3 consecutive C2H2-type zinc fingers follow at residues Phe467–His491, Phe497–His521, and Tyr527–His551. A disordered region spans residues Met548–Gly568. Ser554, Ser558, and Ser576 each carry phosphoserine. The disordered stretch occupies residues Ala607–His639. Positions His612–Ser621 are enriched in polar residues.

This sequence belongs to the GLI C2H2-type zinc-finger protein family.

It localises to the nucleus. In terms of biological role, essential for neural crest development, converting cells from an epidermal fate to a neural crest cell fate. Binds to DNA. This chain is Zinc finger protein ZIC 5 (ZIC5), found in Homo sapiens (Human).